The following is a 295-amino-acid chain: Pyridoxal 5'-phosphate synthase subunit PdxS (295 aa).

Position 25 (D25) interacts with D-ribose 5-phosphate. The active-site Schiff-base intermediate with D-ribose 5-phosphate is K82. G154 is a binding site for D-ribose 5-phosphate. R166 contacts D-glyceraldehyde 3-phosphate. Residues G215 and 236-237 (GS) contribute to the D-ribose 5-phosphate site.

It belongs to the PdxS/SNZ family. In terms of assembly, in the presence of PdxT, forms a dodecamer of heterodimers.

It catalyses the reaction aldehydo-D-ribose 5-phosphate + D-glyceraldehyde 3-phosphate + L-glutamine = pyridoxal 5'-phosphate + L-glutamate + phosphate + 3 H2O + H(+). The protein operates within cofactor biosynthesis; pyridoxal 5'-phosphate biosynthesis. In terms of biological role, catalyzes the formation of pyridoxal 5'-phosphate from ribose 5-phosphate (RBP), glyceraldehyde 3-phosphate (G3P) and ammonia. The ammonia is provided by the PdxT subunit. Can also use ribulose 5-phosphate and dihydroxyacetone phosphate as substrates, resulting from enzyme-catalyzed isomerization of RBP and G3P, respectively. In Pasteurella multocida (strain Pm70), this protein is Pyridoxal 5'-phosphate synthase subunit PdxS.